A 200-amino-acid polypeptide reads, in one-letter code: Putative biotin transporter BioYB (200 aa).

6 consecutive transmembrane segments (helical) span residues 13-33, 36-56, 61-81, 90-110, 121-141, and 158-178; these read LIGM…VAPF, VAGI…LLLG, AIAM…FAQF, GKSG…GWFL, FLIA…TYMY, and WGFM…LSFI.

This sequence belongs to the BioY family.

Its subcellular location is the cell membrane. Functionally, putative biotin transporter. The sequence is that of Putative biotin transporter BioYB (bioYB) from Bacillus subtilis (strain 168).